We begin with the raw amino-acid sequence, 620 residues long: Dihydroxy-acid dehydratase (620 aa).

Position 81 (aspartate 81) interacts with Mg(2+). Cysteine 122 contributes to the [2Fe-2S] cluster binding site. Positions 123 and 124 each coordinate Mg(2+). Lysine 124 is modified (N6-carboxylysine). Cysteine 195 is a [2Fe-2S] cluster binding site. A Mg(2+)-binding site is contributed by glutamate 491. Serine 517 functions as the Proton acceptor in the catalytic mechanism.

This sequence belongs to the IlvD/Edd family. In terms of assembly, homodimer. [2Fe-2S] cluster serves as cofactor. Mg(2+) is required as a cofactor.

The enzyme catalyses (2R)-2,3-dihydroxy-3-methylbutanoate = 3-methyl-2-oxobutanoate + H2O. The catalysed reaction is (2R,3R)-2,3-dihydroxy-3-methylpentanoate = (S)-3-methyl-2-oxopentanoate + H2O. It functions in the pathway amino-acid biosynthesis; L-isoleucine biosynthesis; L-isoleucine from 2-oxobutanoate: step 3/4. It participates in amino-acid biosynthesis; L-valine biosynthesis; L-valine from pyruvate: step 3/4. Its function is as follows. Functions in the biosynthesis of branched-chain amino acids. Catalyzes the dehydration of (2R,3R)-2,3-dihydroxy-3-methylpentanoate (2,3-dihydroxy-3-methylvalerate) into 2-oxo-3-methylpentanoate (2-oxo-3-methylvalerate) and of (2R)-2,3-dihydroxy-3-methylbutanoate (2,3-dihydroxyisovalerate) into 2-oxo-3-methylbutanoate (2-oxoisovalerate), the penultimate precursor to L-isoleucine and L-valine, respectively. This Colwellia psychrerythraea (strain 34H / ATCC BAA-681) (Vibrio psychroerythus) protein is Dihydroxy-acid dehydratase.